Consider the following 323-residue polypeptide: Protein translocase subunit SecF (323 aa).

6 helical membrane passes run 19 to 39 (GVIVSAILVLLALGLLFFKGF), 138 to 158 (ILSLILALIAIMVYVSFRYEW), 162 to 182 (LASVVALVHDVILVASSVIVF), 189 to 209 (EVIAALLTLIGYSINDTIIIF), 244 to 264 (LTVFFVVLILCVFGSKIIIGF), and 269 to 289 (LIGTIVGTYSSIFIAPKVALL).

This sequence belongs to the SecD/SecF family. SecF subfamily. In terms of assembly, forms a complex with SecD. Part of the essential Sec protein translocation apparatus which comprises SecA, SecYEG and auxiliary proteins SecDF-YajC and YidC.

The protein localises to the cell inner membrane. In terms of biological role, part of the Sec protein translocase complex. Interacts with the SecYEG preprotein conducting channel. SecDF uses the proton motive force (PMF) to complete protein translocation after the ATP-dependent function of SecA. The sequence is that of Protein translocase subunit SecF from Helicobacter pylori (strain J99 / ATCC 700824) (Campylobacter pylori J99).